The sequence spans 166 residues: Lipoprotein signal peptidase (166 aa).

3 consecutive transmembrane segments (helical) span residues W12–Q32, W70–S90, and A102–V122. Active-site residues include D123 and D141. The chain crosses the membrane as a helical span at residues F137–L157.

The protein belongs to the peptidase A8 family.

The protein resides in the cell inner membrane. The enzyme catalyses Release of signal peptides from bacterial membrane prolipoproteins. Hydrolyzes -Xaa-Yaa-Zaa-|-(S,diacylglyceryl)Cys-, in which Xaa is hydrophobic (preferably Leu), and Yaa (Ala or Ser) and Zaa (Gly or Ala) have small, neutral side chains.. Its pathway is protein modification; lipoprotein biosynthesis (signal peptide cleavage). In terms of biological role, this protein specifically catalyzes the removal of signal peptides from prolipoproteins. This is Lipoprotein signal peptidase from Salmonella choleraesuis (strain SC-B67).